The chain runs to 37 residues: U10-ctenitoxin-Co1a (37 aa).

4 cysteine pairs are disulfide-bonded: Cys-2–Cys-17, Cys-9–Cys-22, Cys-16–Cys-33, and Cys-24–Cys-31.

As to expression, expressed by the venom gland.

It is found in the secreted. In terms of biological role, antagonist of L-type calcium channels (Cav1/CACNA1). The polypeptide is U10-ctenitoxin-Co1a (Ctenus ornatus (Brazilian spider)).